Reading from the N-terminus, the 128-residue chain is Orchestin (128 aa).

The signal sequence occupies residues 1 to 20 (MNKVFIIGVCLFIVSQAVLA). Residues 23-95 (WDSDESSDER…DEDSDDSQES (73 aa)) form a disordered region. Basic and acidic residues-rich tracts occupy residues 30 to 49 (DERL…KLVV) and 56 to 81 (EDSN…RKLS). Residues 84–93 (TSDEDSDDSQ) are compositionally biased toward acidic residues.

Phosphorylated on Ser and Tyr residues. Calcium-binding activity is dependent on serine phosphorylation but not on tyrosine phosphorylation. In terms of tissue distribution, posterior caeca epithelium of the gut.

It is found in the secreted. Its function is as follows. Plays a role in cuticle calcification. May induce precipitation of the calcium stored in the posterior caeca as calcium carbonate. The sequence is that of Orchestin from Cryptorchestia cavimana (Amphipod).